The following is a 339-amino-acid chain: Dual specificity protein phosphatase 12 (339 aa).

The residue at position 1 (methionine 1) is an N-acetylmethionine. Residues 1-22 (MLEVQSSNHGCERQAPTTSPAS) are compositionally biased toward polar residues. The interval 1–25 (MLEVQSSNHGCERQAPTTSPASSAG) is disordered. One can recognise a Tyrosine-protein phosphatase domain in the interval 26-170 (HAVEVRPGLY…LKLYEAMGHE (145 aa)). The active-site Phosphocysteine intermediate is cysteine 114. 115 to 120 (HAGVSR) lines the substrate pocket. At serine 334 the chain carries Phosphoserine.

It belongs to the protein-tyrosine phosphatase family. Non-receptor class dual specificity subfamily. Monomer. Requires Zn(2+) as cofactor.

It is found in the nucleus. The protein resides in the cytoplasm. Its subcellular location is the cytosol. The enzyme catalyses O-phospho-L-tyrosyl-[protein] + H2O = L-tyrosyl-[protein] + phosphate. The catalysed reaction is O-phospho-L-seryl-[protein] + H2O = L-seryl-[protein] + phosphate. It catalyses the reaction O-phospho-L-threonyl-[protein] + H2O = L-threonyl-[protein] + phosphate. Dual specificity phosphatase; can dephosphorylate both phosphotyrosine and phosphoserine or phosphothreonine residues. Can dephosphorylate glucokinase (in vitro). Has phosphatase activity with the synthetic substrate 6,8-difluoro-4-methylumbelliferyl phosphate and other in vitro substrates. The protein is Dual specificity protein phosphatase 12 (Dusp12) of Rattus norvegicus (Rat).